The following is a 754-amino-acid chain: 5-methyltetrahydropteroyltriglutamate--homocysteine methyltransferase (754 aa).

5-methyltetrahydropteroyltri-L-glutamate is bound by residues 17–20 (RELK) and Lys-117. L-homocysteine is bound by residues 431–433 (IGS) and Glu-484. Residues 431–433 (IGS) and Glu-484 each bind L-methionine. 5-methyltetrahydropteroyltri-L-glutamate is bound by residues 515–516 (RC) and Trp-561. Position 599 (Asp-599) interacts with L-homocysteine. Asp-599 provides a ligand contact to L-methionine. 5-methyltetrahydropteroyltri-L-glutamate is bound at residue Glu-605. The Zn(2+) site is built by His-641, Cys-643, and Glu-665. Residue His-694 is the Proton donor of the active site. Cys-726 contacts Zn(2+).

The protein belongs to the vitamin-B12 independent methionine synthase family. Zn(2+) serves as cofactor.

It catalyses the reaction 5-methyltetrahydropteroyltri-L-glutamate + L-homocysteine = tetrahydropteroyltri-L-glutamate + L-methionine. Its pathway is amino-acid biosynthesis; L-methionine biosynthesis via de novo pathway; L-methionine from L-homocysteine (MetE route): step 1/1. Functionally, catalyzes the transfer of a methyl group from 5-methyltetrahydrofolate to homocysteine resulting in methionine formation. This Salmonella paratyphi B (strain ATCC BAA-1250 / SPB7) protein is 5-methyltetrahydropteroyltriglutamate--homocysteine methyltransferase.